Here is a 157-residue protein sequence, read N- to C-terminus: Crossover junction endodeoxyribonuclease RuvC (157 aa).

Catalysis depends on residues aspartate 7, glutamate 67, and aspartate 140. Mg(2+) contacts are provided by aspartate 7, glutamate 67, and aspartate 140.

Belongs to the RuvC family. As to quaternary structure, homodimer which binds Holliday junction (HJ) DNA. The HJ becomes 2-fold symmetrical on binding to RuvC with unstacked arms; it has a different conformation from HJ DNA in complex with RuvA. In the full resolvosome a probable DNA-RuvA(4)-RuvB(12)-RuvC(2) complex forms which resolves the HJ. The cofactor is Mg(2+).

It is found in the cytoplasm. It catalyses the reaction Endonucleolytic cleavage at a junction such as a reciprocal single-stranded crossover between two homologous DNA duplexes (Holliday junction).. Functionally, the RuvA-RuvB-RuvC complex processes Holliday junction (HJ) DNA during genetic recombination and DNA repair. Endonuclease that resolves HJ intermediates. Cleaves cruciform DNA by making single-stranded nicks across the HJ at symmetrical positions within the homologous arms, yielding a 5'-phosphate and a 3'-hydroxyl group; requires a central core of homology in the junction. The consensus cleavage sequence is 5'-(A/T)TT(C/G)-3'. Cleavage occurs on the 3'-side of the TT dinucleotide at the point of strand exchange. HJ branch migration catalyzed by RuvA-RuvB allows RuvC to scan DNA until it finds its consensus sequence, where it cleaves and resolves the cruciform DNA. In Rickettsia conorii (strain ATCC VR-613 / Malish 7), this protein is Crossover junction endodeoxyribonuclease RuvC.